A 416-amino-acid chain; its full sequence is MSLSSKLTVQDLELKDKRVFIRVDFNVPLDGKKITSNQRIVAALPTIKYVLEHNPRYVVLASHLGRPNGERNEKYSLAPVAEELQSLLGKPVTFLNDCVGSEVDSAVKASAPGSVILLENLRYHIEEEGSRKVDGQKVKASAEDVAKFRKELCSLADVYINDAFGTAHRAHSSMVGFDLPQRAAGFLLTKELQYFGKALENPTRPFLAILGGAKVADKIQLIDNLLDKVDSIIIGGGMAFTFKKVLENAEIGDSIFDKAGAEIVPKLMEKAKAKGVEVVLPVDFVIADAFSADANTKIVSDKEGIPAGWQGLDNGPESRKLFAATIAKAKTIVWNGPPGVFEFEKFASGTKAMLDEVVKSSTSGNTVIIGGGDTATVAKKYGVTDKISHVSTGGGASLELLEGKELPGVAFLSEKN.

(2R)-3-phosphoglycerate is bound by residues valine 23, aspartate 24, phenylalanine 25, asparagine 26, glutamine 38, arginine 39, serine 62, histidine 63, glycine 65, arginine 66, leucine 121, arginine 122, histidine 168, and arginine 169. Glycine 212 is an ADP binding site. CDP is bound at residue glycine 212. AMP-binding residues include alanine 213 and lysine 214. Alanine 213 is an ATP binding site. Mg(2+) is bound at residue alanine 213. Mg(2+)-binding residues include alanine 216 and aspartate 217. Aspartate 217 provides a ligand contact to CDP. Lysine 218 lines the AMP pocket. Lysine 218 serves as a coordination point for ATP. Glycine 236 lines the ADP pocket. Glycine 236 lines the CDP pocket. Residues glycine 237 and glycine 311 each coordinate AMP. Glycine 237 and glycine 311 together coordinate ATP. Residues glycine 336 and phenylalanine 341 each coordinate CDP. Phenylalanine 341 is a binding site for ADP. Residue glutamate 342 coordinates AMP. ATP-binding residues include glutamate 342, aspartate 373, and threonine 374. Residue aspartate 373 coordinates Mg(2+).

This sequence belongs to the phosphoglycerate kinase family. In terms of assembly, monomer. It depends on Mg(2+) as a cofactor.

It is found in the cytoplasm. The protein localises to the mitochondrion. It catalyses the reaction (2R)-3-phosphoglycerate + ATP = (2R)-3-phospho-glyceroyl phosphate + ADP. The protein operates within carbohydrate degradation; glycolysis; pyruvate from D-glyceraldehyde 3-phosphate: step 2/5. Its function is as follows. Catalyzes one of the two ATP producing reactions in the glycolytic pathway via the reversible conversion of 1,3-diphosphoglycerate to 3-phosphoglycerate. Both L- and D- forms of purine and pyrimidine nucleotides can be used as substrates, but the activity is much lower on pyrimidines. Negatively regulates the biosynthesis of acetyl-CoA from pyruvate in the mitochondrion. This is Phosphoglycerate kinase (PGK1) from Candida glabrata (strain ATCC 2001 / BCRC 20586 / JCM 3761 / NBRC 0622 / NRRL Y-65 / CBS 138) (Yeast).